We begin with the raw amino-acid sequence, 1025 residues long: DNA ligase 4 (1025 aa).

The disordered stretch occupies residues M1–V36. The ATP site is built by E289, K291, L292, R296, E349, F387, E447, K452, K469, and K471. Residue K291 is the N6-AMP-lysine intermediate of the active site. E349 serves as a coordination point for Mg(2+). A Mg(2+)-binding site is contributed by E447. A BRCT 1 domain is found at V667 to F763. The segment at A773–K904 is disordered. 2 stretches are compositionally biased toward acidic residues: residues E775–G785 and S806–A816. Residues P817–S838 show a composition bias toward basic and acidic residues. Positions D845–D870 are enriched in acidic residues. Over residues R891 to K904 the composition is skewed to basic and acidic residues. One can recognise a BRCT 2 domain in the interval D915–F1025.

This sequence belongs to the ATP-dependent DNA ligase family. Mg(2+) is required as a cofactor.

Its subcellular location is the nucleus. It carries out the reaction ATP + (deoxyribonucleotide)n-3'-hydroxyl + 5'-phospho-(deoxyribonucleotide)m = (deoxyribonucleotide)n+m + AMP + diphosphate.. Its function is as follows. DNA ligase involved in DNA non-homologous end joining (NHEJ); required for double-strand break (DSB) repair. In Coprinopsis cinerea (strain Okayama-7 / 130 / ATCC MYA-4618 / FGSC 9003) (Inky cap fungus), this protein is DNA ligase 4 (LIG4).